Consider the following 369-residue polypeptide: Septin-5 (369 aa).

Thr13 is subject to Phosphothreonine. In terms of domain architecture, Septin-type G spans 41–314 (KGFDFTLMVA…ENYRAHCIQQ (274 aa)). The G1 motif stretch occupies residues 51-58 (GESGLGKS). Residues 51–58 (GESGLGKS), Thr85, and Gly111 contribute to the GTP site. Residues 108-111 (DTPG) are G3 motif. Position 168 is an omega-N-methylarginine (Arg168). The segment at 189 to 192 (AKAD) is G4 motif. 190–198 (KADCLVPSE) provides a ligand contact to GTP. Ser225 is modified (phosphoserine). GTP-binding residues include Gly248 and Arg263. Residue Ser327 is modified to Phosphoserine. Phosphothreonine is present on Thr336. Positions 338–369 (DAETEKLIRMKDEELRRMQEMLQRMKQQMQDQ) form a coiled coil.

Belongs to the TRAFAC class TrmE-Era-EngA-EngB-Septin-like GTPase superfamily. Septin GTPase family. As to quaternary structure, septins polymerize into heterooligomeric protein complexes that form filaments, and can associate with cellular membranes, actin filaments and microtubules. GTPase activity is required for filament formation. Interacts with SEPTIN2 and SEPTIN5. In platelets, associated with a complex containing STX4. Interacts with PRKN; this interaction leads to SEPTIN5 ubiquitination and degradation. Interacts with DYRK1A. Interacts with STX1A; in the cerebellar cortex. Post-translationally, phosphorylated by DYRK1A. In platelets, phosphorylated in response to thrombin, phorbol-12-myristate-13-acetate and collagen. Expressed at high levels in the CNS, as well as in heart and platelets (at protein level).

The protein localises to the cytoplasm. The protein resides in the cytoskeleton. Functionally, filament-forming cytoskeletal GTPase. May play a role in cytokinesis (Potential). May play a role in platelet secretion. The chain is Septin-5 from Homo sapiens (Human).